Reading from the N-terminus, the 355-residue chain is UDP-N-acetylglucosamine--N-acetylmuramyl-(pentapeptide) pyrophosphoryl-undecaprenol N-acetylglucosamine transferase (355 aa).

Residues 15–17, Asn127, Arg163, Ser191, Ile245, 264–269, and Gln289 contribute to the UDP-N-acetyl-alpha-D-glucosamine site; these read TGG and ALTVSE.

Belongs to the glycosyltransferase 28 family. MurG subfamily.

The protein localises to the cell inner membrane. It carries out the reaction di-trans,octa-cis-undecaprenyl diphospho-N-acetyl-alpha-D-muramoyl-L-alanyl-D-glutamyl-meso-2,6-diaminopimeloyl-D-alanyl-D-alanine + UDP-N-acetyl-alpha-D-glucosamine = di-trans,octa-cis-undecaprenyl diphospho-[N-acetyl-alpha-D-glucosaminyl-(1-&gt;4)]-N-acetyl-alpha-D-muramoyl-L-alanyl-D-glutamyl-meso-2,6-diaminopimeloyl-D-alanyl-D-alanine + UDP + H(+). The protein operates within cell wall biogenesis; peptidoglycan biosynthesis. In terms of biological role, cell wall formation. Catalyzes the transfer of a GlcNAc subunit on undecaprenyl-pyrophosphoryl-MurNAc-pentapeptide (lipid intermediate I) to form undecaprenyl-pyrophosphoryl-MurNAc-(pentapeptide)GlcNAc (lipid intermediate II). This is UDP-N-acetylglucosamine--N-acetylmuramyl-(pentapeptide) pyrophosphoryl-undecaprenol N-acetylglucosamine transferase from Yersinia enterocolitica serotype O:8 / biotype 1B (strain NCTC 13174 / 8081).